Consider the following 635-residue polypeptide: Chaperone protein HtpG (635 aa).

The segment at 1–344 is a; substrate-binding; that stretch reads MSETATTNKE…SNDLPLNVSR (344 aa). The tract at residues 345–561 is b; that stretch reads EILQDNKITQ…DYEMGTQMAK (217 aa). Residues 562 to 635 are c; it reads LLAAAGQPVP…AVNQLLAPSH (74 aa).

This sequence belongs to the heat shock protein 90 family. In terms of assembly, homodimer.

The protein resides in the cytoplasm. Molecular chaperone. Has ATPase activity. The chain is Chaperone protein HtpG from Vibrio cholerae serotype O1 (strain ATCC 39541 / Classical Ogawa 395 / O395).